A 466-amino-acid chain; its full sequence is Tissue alpha-L-fucosidase (466 aa).

Residues 1–31 (MRAPGMRSRPAGPALLLLLLFLGAAESVRRA) form the signal peptide. The residue at position 170 (threonine 170) is a Phosphothreonine. Asparagine 241, asparagine 268, and asparagine 382 each carry an N-linked (GlcNAc...) asparagine glycan.

This sequence belongs to the glycosyl hydrolase 29 family. In terms of assembly, homotetramer.

Its subcellular location is the lysosome. The enzyme catalyses an alpha-L-fucoside + H2O = L-fucose + an alcohol. The catalysed reaction is a neolactoside IV(2)-alpha-Fuc-nLc4Cer(d18:1(4E)) + H2O = a neolactoside nLc4Cer(d18:1(4E)) + L-fucose. It carries out the reaction a neolactoside IV(2)-alpha-Fuc-nLc4Cer(d18:0) + H2O = a neolactoside nLc4Cer(d18:0) + L-fucose. In terms of biological role, alpha-L-fucosidase is responsible for hydrolyzing the alpha-1,6-linked fucose joined to the reducing-end N-acetylglucosamine of the carbohydrate moieties of glycoproteins. The polypeptide is Tissue alpha-L-fucosidase (Homo sapiens (Human)).